A 534-amino-acid polypeptide reads, in one-letter code: Cytochrome P450 monooxygenase ascG (534 aa).

The helical transmembrane segment at 13 to 33 (FVASFPALSAAAGLIVAISFI) threads the bilayer. Residue Asn466 is glycosylated (N-linked (GlcNAc...) asparagine). Cys469 is a heme binding site.

It belongs to the cytochrome P450 family. Heme serves as cofactor.

The protein resides in the membrane. It carries out the reaction ilicicolin C + NADPH + O2 + H(+) = ascochlorin + NADP(+) + 2 H2O. Its pathway is secondary metabolite biosynthesis; terpenoid biosynthesis. Its function is as follows. Cytochrome P450 monooxygenase; part of the asc-1 gene cluster that mediates the biosynthesis of both ascochlorin and ascofuranone, a strong inhibitor of cyanide-insensitive alternative oxidases and a promising drug candidate against African trypanosomiasis. The first step in the pathway is performed by the non-reducing polyketide synthase ascC that produces orsellinic acid by condensing acetyl-CoA with 3 malonyl-CoA units. Orsellinic acid is then prenylated by the prenyltransferase ascA to yield ilicicolinic acid B. Ilicicolinic acid B is further reduced to ilicicolin B by the reductase ascB. The halogenase ascD then chlorinates ilicicolin B to produce ilicicolin A which is converted to ilicicolin A epoxide by the cytochrome P450 monooxygenase ascE that catalyzes stereoselective epoxidation of the terminal double bond of the prenyl group. Ilicicolin A epoxide is the last common precursor for the biosynthesis of ascofuranone and ascochlorin. The terpene cyclase ascF produces a monocyclic terpene, and the cyclization reaction is proposed to be initiated by protonation of the terminal epoxide of ilicicolin A epoxide to generate a monocyclic tertiarycation, which is followed by a series of hydride and methyl shifts with abstraction of proton, leading to the formation of the (14S,15R,19R)-trimethylcyclohexanone ring structure of ilicicolin C, which is finally reduced to ascochlorin by the dehydrogenase ascG. On the other hand, ilicicolin A epoxide is hydroxylated by the cytochrome P450 monooxygenase ascH, and the resultant product is cyclized by the terpene cyclase ascI to ascofuranol via protonation-initiated epoxide ring opening, which facilitates the 6-endo-tet cyclization to form the tetrahy-drofuran ring. Finally, ascofuranol is oxidized into ascofuranone by ascJ. This is Cytochrome P450 monooxygenase ascG from Acremonium egyptiacum (Oospora egyptiaca).